The sequence spans 298 residues: Interferon-inducible double-stranded RNA-dependent protein kinase activator A homolog B (298 aa).

DRBM domains lie at 20–87 (TPIQ…ILRG), 112–180 (NPVG…KFKT), and 225–293 (DYVK…YLKI).

This sequence belongs to the PRKRA family. As to quaternary structure, homodimer. Interacts with dicer1 and eif2ak2/pkr. Also able to interact with dsRNA. Associates with ribosomes. As to expression, expressed in brain, heart, kidney, liver, nerve and spleen.

It is found in the cytoplasm. The protein localises to the perinuclear region. It localises to the nucleus. Its subcellular location is the nucleolus. Activates eif2ak2/pkr in the absence of double-stranded RNA (dsRNA), leading to phosphorylation of eif2s1/efi2-alpha and inhibition of translation and induction of apoptosis. Required for siRNA production by dicer1 and for subsequent siRNA-mediated post-transcriptional gene silencing. Does not seem to be required for processing of pre-miRNA to miRNA by dicer1. The chain is Interferon-inducible double-stranded RNA-dependent protein kinase activator A homolog B (prkra-b) from Xenopus laevis (African clawed frog).